The chain runs to 293 residues: 4-diphosphocytidyl-2-C-methyl-D-erythritol kinase (293 aa).

Lysine 16 is a catalytic residue. Residue 99 to 109 (PMGAGLGGGSS) coordinates ATP. The active site involves aspartate 141.

The protein belongs to the GHMP kinase family. IspE subfamily.

It catalyses the reaction 4-CDP-2-C-methyl-D-erythritol + ATP = 4-CDP-2-C-methyl-D-erythritol 2-phosphate + ADP + H(+). The protein operates within isoprenoid biosynthesis; isopentenyl diphosphate biosynthesis via DXP pathway; isopentenyl diphosphate from 1-deoxy-D-xylulose 5-phosphate: step 3/6. Its function is as follows. Catalyzes the phosphorylation of the position 2 hydroxy group of 4-diphosphocytidyl-2C-methyl-D-erythritol. The polypeptide is 4-diphosphocytidyl-2-C-methyl-D-erythritol kinase (Burkholderia orbicola (strain MC0-3)).